A 353-amino-acid polypeptide reads, in one-letter code: D-alanine--D-alanine ligase (353 aa).

The region spanning 141 to 349 (KAAFAAAGLP…LEELVSQLVI (209 aa)) is the ATP-grasp domain. 176–231 (EAKLKYPCFVKPANLGSSVGISKAQNRNELLIGLDKAASLDRRIVVEQGVSARELE) serves as a coordination point for ATP. Residues aspartate 302, glutamate 316, and asparagine 318 each contribute to the Mg(2+) site.

This sequence belongs to the D-alanine--D-alanine ligase family. Requires Mg(2+) as cofactor. The cofactor is Mn(2+).

It localises to the cytoplasm. The enzyme catalyses 2 D-alanine + ATP = D-alanyl-D-alanine + ADP + phosphate + H(+). It functions in the pathway cell wall biogenesis; peptidoglycan biosynthesis. In terms of biological role, cell wall formation. This Prochlorococcus marinus (strain MIT 9303) protein is D-alanine--D-alanine ligase.